We begin with the raw amino-acid sequence, 845 residues long: ABC transporter A family member 9 (845 aa).

Helical transmembrane passes span 33–53 (CVQISIPLILVIILVIVNFWV), 192–212 (AFVAFSMNTMTTTILNYFLGG), 235–255 (IASLLGGSFYPFALSFIMPLF), 292–312 (IYFIIIVFVVGVSSIFGFAVF), 318–338 (FAMFLFLFAWGNSMITFSFFL), 347–367 (AASIFGYFLVIIAVNLNSILS), and 417–437 (SKIIFWLYIDAIVYLLIALYL). In terms of domain architecture, ABC transporter spans 531–762 (VIIEGLTKHY…FGDGYSVRIN (232 aa)). ATP is bound at residue 565 to 572 (GANGAGKT).

Belongs to the ABC transporter superfamily. ABCA family.

The protein localises to the membrane. This chain is ABC transporter A family member 9 (abcA9), found in Dictyostelium discoideum (Social amoeba).